Here is a 102-residue protein sequence, read N- to C-terminus: Large ribosomal subunit protein bL21 (102 aa).

The protein belongs to the bacterial ribosomal protein bL21 family. As to quaternary structure, part of the 50S ribosomal subunit. Contacts protein L20.

Its function is as follows. This protein binds to 23S rRNA in the presence of protein L20. This Geobacter sulfurreducens (strain ATCC 51573 / DSM 12127 / PCA) protein is Large ribosomal subunit protein bL21.